Reading from the N-terminus, the 234-residue chain is Ribonuclease HII (234 aa).

The region spanning 47–234 (IRIAGVDEVG…KTVHKILYQE (188 aa)) is the RNase H type-2 domain. Positions 53, 54, and 144 each coordinate a divalent metal cation.

The protein belongs to the RNase HII family. The cofactor is Mn(2+). Mg(2+) is required as a cofactor.

It is found in the cytoplasm. It carries out the reaction Endonucleolytic cleavage to 5'-phosphomonoester.. In terms of biological role, endonuclease that specifically degrades the RNA of RNA-DNA hybrids. In Ruegeria pomeroyi (strain ATCC 700808 / DSM 15171 / DSS-3) (Silicibacter pomeroyi), this protein is Ribonuclease HII.